A 529-amino-acid polypeptide reads, in one-letter code: T-complex protein 1 subunit beta (529 aa).

It belongs to the TCP-1 chaperonin family. In terms of assembly, heterooligomeric complex of about 850 to 900 kDa that forms two stacked rings, 12 to 16 nm in diameter.

The protein resides in the cytoplasm. Functionally, molecular chaperone; assists the folding of proteins upon ATP hydrolysis. Known to play a role, in vitro, in the folding of actin and tubulin. In Caenorhabditis elegans, this protein is T-complex protein 1 subunit beta (cct-2).